A 145-amino-acid chain; its full sequence is MHVLVINGPNLNRLGKRQPEVYGSTTLADVEAMVARRADALGVGVSFIQSNHEGELIDAVHNAADHGWPVIINPGGFTHTSVALRDALAEIADGAGFVEVHISNVHAREPFRAHSYLSPIALGVIAGLGVRGYELALEFLADRER.

Y22 serves as the catalytic Proton acceptor. Substrate-binding residues include N73, H79, and D86. H101 functions as the Proton donor in the catalytic mechanism. Residues 102–103 and R112 contribute to the substrate site; that span reads IS.

This sequence belongs to the type-II 3-dehydroquinase family. In terms of assembly, homododecamer.

It catalyses the reaction 3-dehydroquinate = 3-dehydroshikimate + H2O. Its pathway is metabolic intermediate biosynthesis; chorismate biosynthesis; chorismate from D-erythrose 4-phosphate and phosphoenolpyruvate: step 3/7. Its function is as follows. Catalyzes a trans-dehydration via an enolate intermediate. This chain is 3-dehydroquinate dehydratase 2 (aroQ2), found in Corynebacterium efficiens (strain DSM 44549 / YS-314 / AJ 12310 / JCM 11189 / NBRC 100395).